The sequence spans 530 residues: 3-oxo-5-alpha-steroid 4-dehydrogenase (530 aa).

D33–R62 provides a ligand contact to FAD. The helical transmembrane segment at A395 to M415 threads the bilayer.

Belongs to the FAD-dependent oxidoreductase 2 family. It depends on FAD as a cofactor.

The protein localises to the membrane. The enzyme catalyses a 3-oxo-5alpha-steroid + A = a 3-oxo-Delta(4)-steroid + AH2. The catalysed reaction is 5alpha-androstan-3,17-dione + A = androst-4-ene-3,17-dione + AH2. It carries out the reaction 5alpha-androst-1-ene-3,17-dione + A = androsta-1,4-diene-3,17-dione + AH2. With respect to regulation, inhibition occurs with substrate concentrations above 25 uM. Involved in the degradation of steroids having an A:B ring fusion in a trans configuration. Catalyzes the elimination of hydrogens located at positions 4 and 5 and the introduction of double bonds into ring A. This chain is 3-oxo-5-alpha-steroid 4-dehydrogenase, found in Comamonas testosteroni (Pseudomonas testosteroni).